A 41-amino-acid polypeptide reads, in one-letter code: Ostricacin-2 (41 aa).

Disulfide bonds link cysteine 8–cysteine 36, cysteine 15–cysteine 30, and cysteine 20–cysteine 37.

The protein localises to the secreted. Has antibacterial activity against the Gram-positive bacterium S.aureus 1056 MRSA (MIC=1.25 ug/ml) and the Gram-negative bacterium E.coli O157:H7 (MIC=0.96 ug/ml). Has antifungal activity against the yeast C.albicans 3153A (MIC=6.20 ug/ml). The sequence is that of Ostricacin-2 from Struthio camelus (Common ostrich).